The chain runs to 193 residues: Peptidyl-tRNA hydrolase (193 aa).

Tyr16 serves as a coordination point for tRNA. His21 acts as the Proton acceptor in catalysis. TRNA-binding residues include Phe67, Asn69, and Asn115.

It belongs to the PTH family. As to quaternary structure, monomer.

It localises to the cytoplasm. The enzyme catalyses an N-acyl-L-alpha-aminoacyl-tRNA + H2O = an N-acyl-L-amino acid + a tRNA + H(+). Hydrolyzes ribosome-free peptidyl-tRNAs (with 1 or more amino acids incorporated), which drop off the ribosome during protein synthesis, or as a result of ribosome stalling. In terms of biological role, catalyzes the release of premature peptidyl moieties from peptidyl-tRNA molecules trapped in stalled 50S ribosomal subunits, and thus maintains levels of free tRNAs and 50S ribosomes. The sequence is that of Peptidyl-tRNA hydrolase from Baumannia cicadellinicola subsp. Homalodisca coagulata.